Reading from the N-terminus, the 236-residue chain is 2-C-methyl-D-erythritol 4-phosphate cytidylyltransferase (236 aa).

The protein belongs to the IspD/TarI cytidylyltransferase family. IspD subfamily. Homodimer.

It catalyses the reaction 2-C-methyl-D-erythritol 4-phosphate + CTP + H(+) = 4-CDP-2-C-methyl-D-erythritol + diphosphate. It participates in isoprenoid biosynthesis; isopentenyl diphosphate biosynthesis via DXP pathway; isopentenyl diphosphate from 1-deoxy-D-xylulose 5-phosphate: step 2/6. Functionally, catalyzes the formation of 4-diphosphocytidyl-2-C-methyl-D-erythritol from CTP and 2-C-methyl-D-erythritol 4-phosphate (MEP). The polypeptide is 2-C-methyl-D-erythritol 4-phosphate cytidylyltransferase (Salmonella paratyphi B (strain ATCC BAA-1250 / SPB7)).